An 87-amino-acid polypeptide reads, in one-letter code: Mu-theraphotoxin-Cg1a (87 aa).

A signal peptide spans 1–21 (MKVLVLITLAVLGAMFVWTSA). A propeptide spanning residues 22 to 50 (AELEERGSDQRDSPAWVKSMERIFQSEER) is cleaved from the precursor. Disulfide bonds link C52–C66, C59–C71, and C65–C79.

It belongs to the neurotoxin 10 (Hwtx-1) family. 39 (Jztx-34) subfamily. In terms of tissue distribution, expressed by the venom gland.

The protein localises to the secreted. Its function is as follows. Potent and selective inhibitor of hNav1.7/SCN9A (IC(50)=610 nM). Also shows a weak activity towards Nav1.3/SCN3A (IC(50)=7950 nM). In addition, inhibits voltage-gated potassium channels (Kv) in rat DRG neurons. It does not alter the voltage dependence of activation, but it causes a small hyperpolarizing shift in the steady-state inactivations of Nav1.7/SNC9A. Chimera experiments show that the toxin binds to the DIIS3-S4 linker (site 4) of Nav1.7/SCN9A, whereas Nav1.7/SCN9A Asp-827 residue is shown by substitution experiments to be critical for its sensitivity. The toxin traps the domain II voltage sensor in the closed configuration, and not in an outward position. In vivo, shows analgesic activity in three rodent pain models (formalin-induced, acid-induced, and thermal). This chain is Mu-theraphotoxin-Cg1a, found in Chilobrachys guangxiensis (Chinese earth tiger tarantula).